The primary structure comprises 496 residues: Transmembrane transporter swnT (496 aa).

Helical transmembrane passes span leucine 40–leucine 60, valine 72–glutamate 92, alanine 124–leucine 144, tryptophan 162–glutamate 182, and alanine 191–alanine 211. Asparagine 225 carries an N-linked (GlcNAc...) asparagine glycan. The next 6 membrane-spanning stretches (helical) occupy residues leucine 270–valine 290, alanine 314–isoleucine 334, proline 368–alanine 388, leucine 396–leucine 416, glycine 434–phenylalanine 454, and tyrosine 467–alanine 487.

Belongs to the amino acid-polyamine-organocation (APC) superfamily. Amino acid/choline transporter (ACT) (TC 2.A.3.4) family.

It localises to the membrane. Its function is as follows. Transmembrane transporter; part of the gene cluster that mediates the biosynthesis of swainsonine, a cytotoxic fungal alkaloid and a potential cancer therapy drug. Does not mediate the secretion of SW and the exact role of swnT in SW biosynthesis remains to be determined. In Metarhizium robertsii (strain ARSEF 23 / ATCC MYA-3075) (Metarhizium anisopliae (strain ARSEF 23)), this protein is Transmembrane transporter swnT.